Reading from the N-terminus, the 185-residue chain is Homeobox-leucine zipper protein ATHB-22 (185 aa).

The homeobox DNA-binding region spans 76–135; it reads TSEQLKFLERSFQEEIKLNPDRKMKLNPDRKMKLSKELGLQPRQIAVWFQNRKARWKNKQ. The tract at residues 136-164 is leucine-zipper; it reads LEHLYESLRQEFDIVSREKELLQEELIQL.

The protein belongs to the HD-ZIP homeobox family. Class I subfamily. In terms of tissue distribution, expressed in siliques.

The protein localises to the nucleus. In terms of biological role, probable transcription factor. The sequence is that of Homeobox-leucine zipper protein ATHB-22 (ATHB-22) from Arabidopsis thaliana (Mouse-ear cress).